The primary structure comprises 196 residues: Peptidoglycan recognition protein (196 aa).

The signal sequence occupies residues 1-23 (MARLHSAVVLALALSSLLTEIAA). Cystine bridges form between C25/C147 and C61/C67. The 128-residue stretch at 46–173 (RPVSLVIVQH…RQLIASESPG (128 aa)) folds into the N-acetylmuramoyl-L-alanine amidase domain.

Belongs to the N-acetylmuramoyl-L-alanine amidase 2 family. Monomer. In terms of tissue distribution, constitutively expressed in fat body, epithelial cells and hemocytes. Not detected in Malpighian tubules, silk gland or midgut.

Its function is as follows. Binds specifically to peptidoglycan and triggers the propenoloxidase cascade which is an important insect defense mechanism. In Bombyx mori (Silk moth), this protein is Peptidoglycan recognition protein.